We begin with the raw amino-acid sequence, 438 residues long: Protein pop-1 (438 aa).

The interval 1–39 (MMADEELGDEVKVFRRDEDADDDPMISGETSEQQLADDK) is disordered. The tract at residues 1–45 (MMADEELGDEVKVFRRDEDADDDPMISGETSEQQLADDKKEAVME) is sufficient for interaction with beta-catenin/sys-1. Residues 9 to 18 (DEVKVFRRDE) are compositionally biased toward basic and acidic residues. The tract at residues 88–130 (AALPMFMPLFMNPYAAALRSPSLMFPMGAMSPTFPMFPPSPVY) is involved in nuclear asymmetry. Ser118 and Ser127 each carry phosphoserine; by LIT1. Residues 192 to 262 (VKKPLNAFMW…THKERYPEWS (71 aa)) constitute a DNA-binding region (HMG box). The span at 250–263 (DKETHKERYPEWSA) shows a compositional bias: basic and acidic residues. 3 disordered regions span residues 250-288 (DKET…ENND), 318-351 (TDRS…PKAN), and 378-438 (TTGA…MCTI). Over residues 270-279 (NKKKTKKRRD) the composition is skewed to basic residues. 2 stretches are compositionally biased toward polar residues: residues 324–339 (SDIT…SGAY) and 378–395 (TTGA…SSAG). The span at 406–418 (SESDVEEEEDEQI) shows a compositional bias: acidic residues.

It belongs to the TCF/LEF family. Interacts (via N-terminal region) with beta-catenin homolog sys-1. Interacts with hda-1. Interacts with bar-1. Interacts with par-5; the interaction is direct and is enhanced by lit-1-mediated pop-1 phosphorylation. The interaction also leads to the subsequent nuclear export of pop-1. Interacts (when phosphorylated on Ser-118 and Ser-127) with lit-1; the interaction is dependent on the beta-catenin-lit-1 complex. Interacts with wrm-1. Interacts with homeobox protein egl-5. Interacts with zinc finger transcription factor ref-2; the interaction is direct and facilitates transcriptional activation; transcription may be repressed by beta-catenin/sys-1. Phosphorylated on Ser-118 and Ser-127 by lit-1 in the beta-catenin-lit-1 complex. Phosphorylation promotes the interaction of pop-1 and par-5 and the subsequent translocation of pop-1 from the nucleus to the cytoplasm.

It is found in the nucleus. The protein resides in the cytoplasm. In terms of biological role, transcription factor. Part of the Wnt signaling asymmetry pathway. Binds to the consensus sequence, 5'-(C/T)TTTG(A/T)(A/T)(G/C)-3'. Activates or represses target gene expression, depending on upstream Wnt signals and interactions with transcription co-regulators, such as beta-catenin/sys-1 or zinc finger transcription factor ref-2. Essential for the specification of the mesodermal and endodermal cell fates in early embryos. Required in many asymmetrical cell divisions in the early embryo and during larval development. Reciprocal distribution patterns of sys-1 and pop-1 in the daughters of anterior-posterior cell divisions functions in specifying cell fate; a higher sys-1 to pop-1 ratio promotes the posterior cell fate, whereas a low sys-1 to pop-1 ratio promotes the anterior fate. Involved in modulating nuclear localization or nuclear retention of sys-1. Involved in the terminal asymmetrical division of many embryonic neuroblasts; for example in the SMDD/AIY neuron lineage. In complex with ref-2, positively modulates expression of LIM/homeobox protein ttx-3 in anterior daughter cells of the SMDD/AIY lineage. Required for asymmetrical division of somatic gonadal precursor descendants which initiate axis formation required to control organ shape. Similarly, involved in asymmetrical division of seam cells, a stem cell-like lineage. Represses expression of target genes via its interaction with hda-1 histone deacetylase. Required for specification of the M lineage-derived coelomocyte and sex myoblast fate. Regulates coelomocyte fate by positively regulating proliferation and ceh-34 and possibly eya-1 expression in M.dlpa and M.drpa precursors. This is Protein pop-1 from Caenorhabditis elegans.